A 496-amino-acid polypeptide reads, in one-letter code: Alanine aminotransferase 1 (496 aa).

A2 carries the post-translational modification N-acetylalanine. A Phosphothreonine modification is found at T22. The residue at position 314 (K314) is an N6-(pyridoxal phosphate)lysine.

Belongs to the class-I pyridoxal-phosphate-dependent aminotransferase family. Alanine aminotransferase subfamily. Homodimer. The cofactor is pyridoxal 5'-phosphate. As to expression, liver, heart, skeletal muscle, etc.

It is found in the cytoplasm. It catalyses the reaction L-alanine + 2-oxoglutarate = pyruvate + L-glutamate. Its pathway is amino-acid degradation; L-alanine degradation via transaminase pathway; pyruvate from L-alanine: step 1/1. Catalyzes the reversible transamination between alanine and 2-oxoglutarate to form pyruvate and glutamate. Participates in cellular nitrogen metabolism and also in liver gluconeogenesis starting with precursors transported from skeletal muscles. The polypeptide is Alanine aminotransferase 1 (Gpt) (Rattus norvegicus (Rat)).